A 663-amino-acid polypeptide reads, in one-letter code: Protein THEMIS2 (663 aa).

CABIT stretches follow at residues 2 to 237 (EPVP…TASS) and 238 to 515 (QHIH…EAEG). A disordered region spans residues 545–663 (ASESQAPPPR…DMDDHDYEEI (119 aa)). The segment covering 559–577 (QGINKKQQNIQSCKESSVK) has biased composition (polar residues). Thr-596 carries the phosphothreonine modification. A compositionally biased stretch (polar residues) spans 621-641 (NPQTQNSVLSMKPKTSSSLGK). A compositionally biased stretch (acidic residues) spans 653–663 (PDMDDHDYEEI). Tyr-660 carries the post-translational modification Phosphotyrosine.

The protein belongs to the themis family. Interacts with VAV1. Interacts with LAT. Interacts constitutively with GRB2, LYN and PLCG2; these interactions increase the activation of PLCG2 and its downstream pathways following B cell receptor stimulation. In terms of processing, phosphorylation at Tyr-660 is induced by LPS. Phosphorylated by Src kinases (Lck or Fyn) following BCR engagement. In terms of tissue distribution, expressed in both developing and mature B-cells with high expression in immature, follicular and B1 B cells. Also expressed in macrophages and dendritic cells. Down-regulated in splenocytes of mice developing arthritis in a collagen-induced model, not in those of mice failing to develop the disease. Transiently down-regulated in splenocytes of mice infected with influenza virus.

The protein localises to the nucleus. It is found in the cytoplasm. Its function is as follows. May constitute a control point in macrophage inflammatory response, promoting LPS-induced TLR4-mediated TNF production. Determines the threshold for activation of B cells by low-affinity and low-avidity ligands via PLCG2 activation and its downstream pathways. The sequence is that of Protein THEMIS2 from Mus musculus (Mouse).